The primary structure comprises 360 residues: Membrane-bound lytic murein transglycosylase C (360 aa).

Residues 1-16 form the signal peptide; sequence MKKLLALAVIAPLLIS. The N-palmitoyl cysteine moiety is linked to residue Cys17. A lipid anchor (S-diacylglycerol cysteine) is attached at Cys17.

It belongs to the transglycosylase Slt family.

The protein localises to the cell outer membrane. It carries out the reaction Exolytic cleavage of the (1-&gt;4)-beta-glycosidic linkage between N-acetylmuramic acid (MurNAc) and N-acetylglucosamine (GlcNAc) residues in peptidoglycan, from either the reducing or the non-reducing ends of the peptidoglycan chains, with concomitant formation of a 1,6-anhydrobond in the MurNAc residue.. Murein-degrading enzyme. May play a role in recycling of muropeptides during cell elongation and/or cell division. This Salmonella typhi protein is Membrane-bound lytic murein transglycosylase C.